We begin with the raw amino-acid sequence, 396 residues long: Tryptophan synthase beta chain (396 aa).

An N6-(pyridoxal phosphate)lysine modification is found at K86.

It belongs to the TrpB family. In terms of assembly, tetramer of two alpha and two beta chains. The cofactor is pyridoxal 5'-phosphate.

The catalysed reaction is (1S,2R)-1-C-(indol-3-yl)glycerol 3-phosphate + L-serine = D-glyceraldehyde 3-phosphate + L-tryptophan + H2O. It participates in amino-acid biosynthesis; L-tryptophan biosynthesis; L-tryptophan from chorismate: step 5/5. Functionally, the beta subunit is responsible for the synthesis of L-tryptophan from indole and L-serine. The polypeptide is Tryptophan synthase beta chain (Yersinia pseudotuberculosis serotype O:1b (strain IP 31758)).